The primary structure comprises 64 residues: Large ribosomal subunit protein bL32 (64 aa).

Residues 1-16 (MAVQKSRKTRSRRGMR) show a composition bias toward basic residues. A disordered region spans residues 1 to 64 (MAVQKSRKTR…TPKESYEDEE (64 aa)).

The protein belongs to the bacterial ribosomal protein bL32 family.

This chain is Large ribosomal subunit protein bL32, found in Coxiella burnetii (strain CbuK_Q154) (Coxiella burnetii (strain Q154)).